The sequence spans 344 residues: MACSMLNGVDKLALISGKTPNRLRFSGSDFTGSYKLPRLNLPPNSRNLRAKTLTTVTKCTLSASERPASQPRFIQNKQEAFWFYRFLSIVYDNIINPGHWTEDMRDVALEPADLNNRNMLVVDVGGGTGFTTLGIIKHVDPKNVTILDQSPHQLAKAKAKKPLKECRIIEGDAEDLPFPTDYADRYVSAGSIEYWPDPQRGIREAYRVLKLGGKACLIGPVYPTFWLSRFFADVWMLFPKEEEYIEWFQKAGFKDVQLKRIGPKWYRGVRRHGLIMGCSVTGVKPASGDSPLQLGPKVEDVQKPVHPLVFLYRFLLGALASTYYVLVPIYMWIKDKIFPKGMPL.

The N-terminal 62 residues, 1 to 62 (MACSMLNGVD…LTTVTKCTLS (62 aa)), are a transit peptide targeting the chloroplast. Residues 63-313 (ASERPASQPR…PVHPLVFLYR (251 aa)) are Chloroplast intermembrane-facing. Positions 121–130 (VVDVGGGTGF) are SAM motif I. The segment at 166–179 (CRIIEGDAEDLPFP) is SAM motif II. Residues 207 to 220 (RVLKLGGKACLIGP) form an SAM motif III region. A helical transmembrane segment spans residues 314 to 334 (FLLGALASTYYVLVPIYMWIK). Residues 335–344 (DKIFPKGMPL) are Stromal-facing.

This sequence belongs to the class I-like SAM-binding methyltransferase superfamily. MPBQ/MBSQ MT family.

The protein localises to the plastid. It localises to the chloroplast inner membrane. It catalyses the reaction 2-methyl-6-phytyl-1,4-benzene-1,4-diol + S-adenosyl-L-methionine = 2,3-dimethyl-6-phytylbenzene-1,4-diol + S-adenosyl-L-homocysteine + H(+). It carries out the reaction 2-methyl-6-(all-trans-nonaprenyl)benzene-1,4-diol + S-adenosyl-L-methionine = plastoquinol-9 + S-adenosyl-L-homocysteine + H(+). The enzyme catalyses 6-geranylgeranyl-2-methylbenzene-1,4-diol + S-adenosyl-L-methionine = 6-geranylgeranyl-2,3-dimethylbenzene-1,4-diol + S-adenosyl-L-homocysteine + H(+). It functions in the pathway cofactor biosynthesis; tocopherol biosynthesis. Functionally, involved in a key methylation step in both tocopherols (vitamin E) and plastoquinone synthesis. Catalyzes the conversion of 2-methyl-6-phytyl-1,4-hydroquinone (MPBQ) to 2,3-dimethyl-6-phytyl-1,4-hydroquinone (DMPQ, a substrate for tocopherol cyclase), and 2-methyl-6-solanyl-1,4-benzoquinone (MSBQ) to plastoquinone. The protein is 2-methyl-6-phytyl-1,4-hydroquinone methyltransferase, chloroplastic of Spinacia oleracea (Spinach).